Reading from the N-terminus, the 127-residue chain is Aspartate 1-decarboxylase (127 aa).

The active-site Schiff-base intermediate with substrate; via pyruvic acid is serine 25. Serine 25 is subject to Pyruvic acid (Ser). Threonine 57 contacts substrate. Tyrosine 58 acts as the Proton donor in catalysis. 73 to 75 contributes to the substrate binding site; it reads GAA.

The protein belongs to the PanD family. Heterooctamer of four alpha and four beta subunits. The cofactor is pyruvate. In terms of processing, is synthesized initially as an inactive proenzyme, which is activated by self-cleavage at a specific serine bond to produce a beta-subunit with a hydroxyl group at its C-terminus and an alpha-subunit with a pyruvoyl group at its N-terminus.

It localises to the cytoplasm. The enzyme catalyses L-aspartate + H(+) = beta-alanine + CO2. The protein operates within cofactor biosynthesis; (R)-pantothenate biosynthesis; beta-alanine from L-aspartate: step 1/1. Its function is as follows. Catalyzes the pyruvoyl-dependent decarboxylation of aspartate to produce beta-alanine. The polypeptide is Aspartate 1-decarboxylase (Staphylococcus aureus (strain bovine RF122 / ET3-1)).